The sequence spans 599 residues: Vitamin B12-dependent ribonucleotide reductase (599 aa).

193–197 (PTGTI) contributes to the substrate binding site. Residues 519–555 (LAQSAPRQAGPAKAATTAPAAKAQEPAAAPSPKQAHN) form a disordered region. Residues 526-553 (QAGPAKAATTAPAAKAQEPAAAPSPKQA) show a composition bias toward low complexity.

Belongs to the ribonucleoside diphosphate reductase class-2 family. Adenosylcob(III)alamin is required as a cofactor.

The enzyme catalyses a 2'-deoxyribonucleoside 5'-diphosphate + [thioredoxin]-disulfide + H2O = a ribonucleoside 5'-diphosphate + [thioredoxin]-dithiol. Catalyzes the reduction of ribonucleotides to deoxyribonucleotides. May function to provide a pool of deoxyribonucleotide precursors for DNA repair during oxygen limitation and/or for immediate growth after restoration of oxygen. This chain is Vitamin B12-dependent ribonucleotide reductase (nrdJ), found in Streptantibioticus cattleyicolor (Streptomyces cattleya).